A 191-amino-acid chain; its full sequence is Protein GrpE (191 aa).

The protein belongs to the GrpE family. In terms of assembly, homodimer.

Its subcellular location is the cytoplasm. Functionally, participates actively in the response to hyperosmotic and heat shock by preventing the aggregation of stress-denatured proteins, in association with DnaK and GrpE. It is the nucleotide exchange factor for DnaK and may function as a thermosensor. Unfolded proteins bind initially to DnaJ; upon interaction with the DnaJ-bound protein, DnaK hydrolyzes its bound ATP, resulting in the formation of a stable complex. GrpE releases ADP from DnaK; ATP binding to DnaK triggers the release of the substrate protein, thus completing the reaction cycle. Several rounds of ATP-dependent interactions between DnaJ, DnaK and GrpE are required for fully efficient folding. The polypeptide is Protein GrpE (Listeria monocytogenes serotype 4b (strain CLIP80459)).